Here is a 279-residue protein sequence, read N- to C-terminus: Large ribosomal subunit protein uL2 (279 aa).

The interval 223–279 (VAMNPIDHPHGGGEGRTSGGRHPVTPWGKGTKGTRTRSNKSTDKYILRSRHAKKKGR) is disordered. The span at 269-279 (LRSRHAKKKGR) shows a compositional bias: basic residues.

This sequence belongs to the universal ribosomal protein uL2 family. Part of the 50S ribosomal subunit. Forms a bridge to the 30S subunit in the 70S ribosome.

In terms of biological role, one of the primary rRNA binding proteins. Required for association of the 30S and 50S subunits to form the 70S ribosome, for tRNA binding and peptide bond formation. It has been suggested to have peptidyltransferase activity; this is somewhat controversial. Makes several contacts with the 16S rRNA in the 70S ribosome. In Paracoccus denitrificans (strain Pd 1222), this protein is Large ribosomal subunit protein uL2.